Here is a 472-residue protein sequence, read N- to C-terminus: Poly(A) polymerase catalytic subunit (472 aa).

Active-site residues include aspartate 194 and aspartate 196.

This sequence belongs to the poxviridae poly(A) polymerase catalytic subunit family. In terms of assembly, heterodimer of a large (catalytic) subunit and a small (regulatory) subunit.

It catalyses the reaction RNA(n) + ATP = RNA(n)-3'-adenine ribonucleotide + diphosphate. Its function is as follows. Polymerase that creates the 3'-poly(A) tail of mRNA's. In Serinus (CNPV), this protein is Poly(A) polymerase catalytic subunit (PAPL).